A 209-amino-acid chain; its full sequence is Lipopolysaccharide export system protein LptC (209 aa).

A helical transmembrane segment spans residues 7–26; the sequence is NIRWNVILGVIALCALAWFY.

It belongs to the LptC family. As to quaternary structure, component of the lipopolysaccharide transport and assembly complex. Interacts with LptA and the LptBFG transporter complex.

Its subcellular location is the cell inner membrane. In terms of biological role, involved in the assembly of lipopolysaccharide (LPS). Required for the translocation of LPS from the inner membrane to the outer membrane. Facilitates the transfer of LPS from the inner membrane to the periplasmic protein LptA. Could be a docking site for LptA. The sequence is that of Lipopolysaccharide export system protein LptC from Haemophilus influenzae (strain ATCC 51907 / DSM 11121 / KW20 / Rd).